The following is a 259-amino-acid chain: NAD kinase (259 aa).

The active-site Proton acceptor is the Asp43. NAD(+) contacts are provided by residues 43–44 (DG), 111–112 (NE), and Arg136.

The protein belongs to the NAD kinase family. Requires a divalent metal cation as cofactor.

The protein localises to the cytoplasm. It catalyses the reaction NAD(+) + ATP = ADP + NADP(+) + H(+). Involved in the regulation of the intracellular balance of NAD and NADP, and is a key enzyme in the biosynthesis of NADP. Catalyzes specifically the phosphorylation on 2'-hydroxyl of the adenosine moiety of NAD to yield NADP. This chain is NAD kinase, found in Mycoplasma pneumoniae (strain ATCC 29342 / M129 / Subtype 1) (Mycoplasmoides pneumoniae).